We begin with the raw amino-acid sequence, 224 residues long: ATP phosphoribosyltransferase (224 aa).

The protein belongs to the ATP phosphoribosyltransferase family. Short subfamily. As to quaternary structure, heteromultimer composed of HisG and HisZ subunits.

The protein localises to the cytoplasm. The catalysed reaction is 1-(5-phospho-beta-D-ribosyl)-ATP + diphosphate = 5-phospho-alpha-D-ribose 1-diphosphate + ATP. Its pathway is amino-acid biosynthesis; L-histidine biosynthesis; L-histidine from 5-phospho-alpha-D-ribose 1-diphosphate: step 1/9. In terms of biological role, catalyzes the condensation of ATP and 5-phosphoribose 1-diphosphate to form N'-(5'-phosphoribosyl)-ATP (PR-ATP). Has a crucial role in the pathway because the rate of histidine biosynthesis seems to be controlled primarily by regulation of HisG enzymatic activity. In Cupriavidus necator (strain ATCC 17699 / DSM 428 / KCTC 22496 / NCIMB 10442 / H16 / Stanier 337) (Ralstonia eutropha), this protein is ATP phosphoribosyltransferase.